Reading from the N-terminus, the 287-residue chain is rRNA adenine N-6-methyltransferase (287 aa).

Basic residues predominate over residues 1 to 13; sequence MKKKNHKYRGKKL. Positions 1–21 are disordered; it reads MKKKNHKYRGKKLNRGESPNF. His-25, Met-27, Gly-52, Glu-73, Asp-98, and Asn-114 together coordinate S-adenosyl-L-methionine.

Belongs to the class I-like SAM-binding methyltransferase superfamily. rRNA adenine N(6)-methyltransferase family.

Involved in erythromycin resistance. In Bacillus licheniformis, this protein is rRNA adenine N-6-methyltransferase (ermD).